The primary structure comprises 170 residues: Odorant-binding protein 2b (170 aa).

An N-terminal signal peptide occupies residues 1–15; it reads MKTLFLGVTLGLAAA. Cys74 and Cys166 form a disulfide bridge.

This sequence belongs to the calycin superfamily. Lipocalin family. Strongly expressed in genital sphere organs such as the prostate and mammary glands.

Its subcellular location is the secreted. Its function is as follows. Probably binds and transports small hydrophobic volatile molecules. The sequence is that of Odorant-binding protein 2b (OBP2B) from Homo sapiens (Human).